The primary structure comprises 173 residues: MSEQLVAVGVLSRPHGIKGEIRLIRYTDSIDVFLGEVFLQKSNSLPKKAEIISSRIHQGVALVCFKGFSDRSAVEVLRGQTLLVSRSFLPEIESNESYLCDLLGFSVVLDNTDEVIGKLEYVSFPGGQELWSIITPEGKEVLLPAIPEFVLEVDTNAQLIRINPPKGLLELYK.

A PRC barrel domain is found at 94–168 (SNESYLCDLL…LIRINPPKGL (75 aa)).

This sequence belongs to the RimM family. In terms of assembly, binds ribosomal protein uS19.

The protein localises to the cytoplasm. Its function is as follows. An accessory protein needed during the final step in the assembly of 30S ribosomal subunit, possibly for assembly of the head region. Essential for efficient processing of 16S rRNA. May be needed both before and after RbfA during the maturation of 16S rRNA. It has affinity for free ribosomal 30S subunits but not for 70S ribosomes. This Lawsonia intracellularis (strain PHE/MN1-00) protein is Ribosome maturation factor RimM.